A 155-amino-acid chain; its full sequence is MSRRSNTVSRPTKPDPIYRNRLVNMLVNRILKNGKKSLGYRILYTALKTIKQKTKKNPLSVLRQAVRRATPNVVVKARRRGGSTYQVPIEVKPSQGRALAIRWLLSAARKRSGRSMGLKLSYELMDAARQTGNAIRKREETHRMAEANRAFAHFR.

This sequence belongs to the universal ribosomal protein uS7 family. As to quaternary structure, part of the 30S ribosomal subunit.

It localises to the plastid. The protein localises to the chloroplast. Functionally, one of the primary rRNA binding proteins, it binds directly to 16S rRNA where it nucleates assembly of the head domain of the 30S subunit. The protein is Small ribosomal subunit protein uS7c (rps7) of Spirogyra maxima (Green alga).